We begin with the raw amino-acid sequence, 379 residues long: Early boundary activity protein 3 (379 aa).

In terms of assembly, the heterotrimeric Elba complex consists of Elba1, Elba2 and Elba3.

The protein localises to the nucleus. Its function is as follows. The heterotrimeric Elba complex is required for chromatin domain boundary function during early embryogenesis. It binds to a 8-bp sequence 5'-CCAATAAG-3' in the Fab-7 insulator or boundary element in the bithorax complex and contributes to its insulator or boundary activity. Elba3 lacks DNA-binding activity and plays the role of an adapter protein, bringing Elba1 and 2 together, thereby establishing a complex that recognizes the asymmetric sequence motif through the BEN domains of Elba1 and 2. The sequence is that of Early boundary activity protein 3 from Drosophila melanogaster (Fruit fly).